The sequence spans 739 residues: Protein NPGR2 (739 aa).

Residues 32–71 form a disordered region; the sequence is EQMRHREEEDKKSEVGVGRDYNGSSALSTAESENAKKLDN. Over residues 33–45 the composition is skewed to basic and acidic residues; the sequence is QMRHREEEDKKSE. Positions 53–63 are enriched in polar residues; that stretch reads NGSSALSTAES. TPR repeat units follow at residues 90–127, 162–195, 215–248, 465–498, 500–533, 536–569, 592–625, 626–659, and 697–733; these read EEAR…KMKT, FEAI…VETS, TKAV…HWKL, PRVV…GAES, LEVW…TGKW, GKLL…LQVQ, LGTW…APYS, SVRY…DPMH, and HSAW…EETM.

In terms of assembly, interacts with calmodulin in a calcium-dependent manner. As to expression, expressed in pollen, flowers and fruits.

This is Protein NPGR2 from Arabidopsis thaliana (Mouse-ear cress).